A 490-amino-acid chain; its full sequence is Betaine aldehyde dehydrogenase (490 aa).

A K(+)-binding site is contributed by aspartate 93. 150-152 is a binding site for NAD(+); the sequence is GAW. The active-site Charge relay system is the lysine 162. 176–179 contributes to the NAD(+) binding site; sequence KPSE. Position 180 (valine 180) interacts with K(+). 230-233 contacts NAD(+); that stretch reads GIAS. K(+) is bound at residue leucine 246. Catalysis depends on glutamate 252, which acts as the Proton acceptor. NAD(+) is bound by residues glycine 254, cysteine 286, and glutamate 387. Cysteine 286 functions as the Nucleophile in the catalytic mechanism. Cysteine sulfenic acid (-SOH) is present on cysteine 286. Lysine 457 and glycine 460 together coordinate K(+). Glutamate 464 (charge relay system) is an active-site residue.

Belongs to the aldehyde dehydrogenase family. As to quaternary structure, dimer of dimers. It depends on K(+) as a cofactor.

It carries out the reaction betaine aldehyde + NAD(+) + H2O = glycine betaine + NADH + 2 H(+). It participates in amine and polyamine biosynthesis; betaine biosynthesis via choline pathway; betaine from betaine aldehyde: step 1/1. Functionally, involved in the biosynthesis of the osmoprotectant glycine betaine. Catalyzes the irreversible oxidation of betaine aldehyde to the corresponding acid. The protein is Betaine aldehyde dehydrogenase of Yersinia pseudotuberculosis serotype O:1b (strain IP 31758).